The primary structure comprises 1358 residues: DNA-directed RNA polymerase subunit beta (1358 aa).

The protein belongs to the RNA polymerase beta chain family. As to quaternary structure, the RNAP catalytic core consists of 2 alpha, 1 beta, 1 beta' and 1 omega subunit. When a sigma factor is associated with the core the holoenzyme is formed, which can initiate transcription.

It carries out the reaction RNA(n) + a ribonucleoside 5'-triphosphate = RNA(n+1) + diphosphate. DNA-dependent RNA polymerase catalyzes the transcription of DNA into RNA using the four ribonucleoside triphosphates as substrates. The protein is DNA-directed RNA polymerase subunit beta of Xanthobacter autotrophicus (strain ATCC BAA-1158 / Py2).